A 279-amino-acid chain; its full sequence is Phosphatidylglycerol--prolipoprotein diacylglyceryl transferase (279 aa).

The next 7 helical transmembrane spans lie at 22–42 (SAHW…WSSI), 58–78 (ILYF…VIFY), 89–109 (FIFK…GSII), 128–148 (FLVP…FING), 195–215 (ISQL…LNIF), 223–243 (GYMS…AEFF), and 256–276 (YISL…ILII). A 1,2-diacyl-sn-glycero-3-phospho-(1'-sn-glycerol) is bound at residue Arg-141.

This sequence belongs to the Lgt family.

The protein localises to the cell membrane. It catalyses the reaction L-cysteinyl-[prolipoprotein] + a 1,2-diacyl-sn-glycero-3-phospho-(1'-sn-glycerol) = an S-1,2-diacyl-sn-glyceryl-L-cysteinyl-[prolipoprotein] + sn-glycerol 1-phosphate + H(+). The protein operates within protein modification; lipoprotein biosynthesis (diacylglyceryl transfer). Functionally, catalyzes the transfer of the diacylglyceryl group from phosphatidylglycerol to the sulfhydryl group of the N-terminal cysteine of a prolipoprotein, the first step in the formation of mature lipoproteins. This Wigglesworthia glossinidia brevipalpis protein is Phosphatidylglycerol--prolipoprotein diacylglyceryl transferase.